The following is a 455-amino-acid chain: Chromosomal replication initiator protein DnaA (455 aa).

A domain I, interacts with DnaA modulators region spans residues 1–70 (MTNETWVQVR…RMRLTEAGSP (70 aa)). Residues 70–113 (PVERLEFAVSNTPRAPLKEVKAAAPAASPARARPAPPEEDLRGA) are domain II. Positions 87 to 109 (KEVKAAAPAASPARARPAPPEED) are disordered. Positions 91–102 (AAAPAASPARAR) are enriched in low complexity. Residues 114–335 (PLDARFTFDS…GALTRLFAFA (222 aa)) form a domain III, AAA+ region region. Residues Gly158, Gly160, Lys161, and Thr162 each contribute to the ATP site. A domain IV, binds dsDNA region spans residues 336–455 (SLVGREITLD…LQLLRRLLQA (120 aa)).

It belongs to the DnaA family. As to quaternary structure, oligomerizes as a right-handed, spiral filament on DNA at oriC.

The protein localises to the cytoplasm. Functionally, plays an essential role in the initiation and regulation of chromosomal replication. ATP-DnaA binds to the origin of replication (oriC) to initiate formation of the DNA replication initiation complex once per cell cycle. Binds the DnaA box (a 9 base pair repeat at the origin) and separates the double-stranded (ds)DNA. Forms a right-handed helical filament on oriC DNA; dsDNA binds to the exterior of the filament while single-stranded (ss)DNA is stabiized in the filament's interior. The ATP-DnaA-oriC complex binds and stabilizes one strand of the AT-rich DNA unwinding element (DUE), permitting loading of DNA polymerase. After initiation quickly degrades to an ADP-DnaA complex that is not apt for DNA replication. Binds acidic phospholipids. In Cereibacter sphaeroides (strain ATCC 17029 / ATH 2.4.9) (Rhodobacter sphaeroides), this protein is Chromosomal replication initiator protein DnaA.